Reading from the N-terminus, the 264-residue chain is GTP cyclohydrolase FolE2 (264 aa).

It belongs to the GTP cyclohydrolase IV family.

The enzyme catalyses GTP + H2O = 7,8-dihydroneopterin 3'-triphosphate + formate + H(+). The protein operates within cofactor biosynthesis; 7,8-dihydroneopterin triphosphate biosynthesis; 7,8-dihydroneopterin triphosphate from GTP: step 1/1. Functionally, converts GTP to 7,8-dihydroneopterin triphosphate. The polypeptide is GTP cyclohydrolase FolE2 (Vesicomyosocius okutanii subsp. Calyptogena okutanii (strain HA)).